Consider the following 387-residue polypeptide: O-methyltransferase asqD (387 aa).

D252 is an S-adenosyl-L-methionine binding site. The active-site Proton acceptor is H294.

Belongs to the class I-like SAM-binding methyltransferase superfamily. Cation-independent O-methyltransferase family.

Its pathway is secondary metabolite biosynthesis. It participates in alkaloid biosynthesis. It functions in the pathway mycotoxin biosynthesis. Its function is as follows. O-methyltransferase; part of the gene cluster that mediates the biosynthesis of the aspoquinolone mycotoxins. The role of asqD within the aspoquinolone pathway has still to be determined. The first step of the pathway is catalyzed by the nonribosomal peptide synthetase asqK that condenses anthranilic acid and O-methyl-L-tyrosine to produce 4'-methoxycyclopeptin. 4'-methoxycyclopeptin is then converted to 4'-methoxydehydrocyclopeptin by the ketoglutarate-dependent dioxygenase asqJ. AsqJ also converts its first product 4'-methoxydehydrocyclopeptin to 4'-methoxycyclopenin. The following conversion of 4'-methoxycyclopenin into 4'-methoxyviridicatin is catalyzed by the cyclopenase asqI. 4'-methoxyviridicatin is the precursor of quinolone natural products, and is further converted to quinolinone B. The prenyltransferase asqH1 then catalyzes the canonical Friedel-Crafts alkylation of quinolinone B with dimethylallyl cation to yield dimethylallyl quinolone, which is subjected to FAD-dependent dehydrogenation by the FAD-linked oxidoreductase asqF to yield conjugated aryl diene. The delta(3') double bond then serves as the site of the second alkylation with DMAPP catalyzed by the prenyltransferase asqH2 to yield a carbenium ion intermediate, which can be attacked by H(2)O to yield a styrenyl quinolone containing a C3'-hydroxyprenyl chain. The FAD-dependent monooxygenase asqG performs epoxidation of the terminal C7'-C8' olefin. Finally, after dehydratation of the epoxide at C3 by asqC, the quinolone epoxide rearrangement protein asqO catalyzes an enzymatic 3-exo-tet cyclization to yield the cyclopropyl-THF ring system in aspoquinolone. The polypeptide is O-methyltransferase asqD (Emericella nidulans (strain FGSC A4 / ATCC 38163 / CBS 112.46 / NRRL 194 / M139) (Aspergillus nidulans)).